The sequence spans 305 residues: Oxidoreductase swnR (305 aa).

Belongs to the NmrA-type oxidoreductase family. Isoflavone reductase subfamily.

It catalyses the reaction L-pipecolate + O2 = L-1-piperideine-6-carboxylate + H2O2 + H(+). The protein operates within mycotoxin biosynthesis. In terms of biological role, oxidoreductase; part of the gene cluster that mediates the biosynthesis of swainsonine (SW), a cytotoxic fungal alkaloid and a potential cancer therapy drug. Swainsonine production occurs via a multibranched pathway and is dispensable for fungal colonization of plants and infection of insect hosts. The first step of swainsonine biosynthesis is the production of the precursor pipecolic acid (PA) via conversion of L-lysine (Lys) to 1-piperideine-6-carboxylate (P6C) by the aminotransferase swnA, the latter being further reduced to PA by the reductase swnR. The PKS-NRPS hybrid synthetase swnK uptakes and condensates PA and malonyl-CoA with and without skipping of the ketoreductase (KR) domain in order to produce 3 intermediates, 1-oxoindolizidine, (1S)-1-hydroxyindolizin, and (1R)-1-hydroxyindolizine; with the transisomer (1S)-1-hydroxyindolizin being predominant. The terminal thioester reductase (TE) domain of swnK is involved in reduction of the thioester bond to release the intermediate aldehydes. The oxidoreductase swnN could contribute to the reduction of 1-oxoindolizidine to (1S)-1-hydroxyindolizin and (1R)-1-hydroxyindolizine, contributing to the major route of SW production. The dioxygenase swnH2 would be responsible for the oxidization of (1R)-1-hydroxyindolizine into (1R,2S)-1,2-dihydroxyindolizine and of (1S)-1-hydroxyindolizin to yield both (1R,2S)-1,2-dihydroxyindolizine and (1S,2S)-1,2-dihydroxyindolizine. The dioxygenase swnH1 then performs the conversion of the 1,2-dihydroxyindolizine epimers to SW. This Arthroderma benhamiae (strain ATCC MYA-4681 / CBS 112371) (Trichophyton mentagrophytes) protein is Oxidoreductase swnR.